Reading from the N-terminus, the 726-residue chain is Catalase-peroxidase (726 aa).

Positions 90 to 213 form a cross-link, tryptophyl-tyrosyl-methioninium (Trp-Tyr) (with M-239); the sequence is WHAAGTYRIG…LAAVQMGLIY (124 aa). Catalysis depends on histidine 91, which acts as the Proton acceptor. The segment at residues 213–239 is a cross-link (tryptophyl-tyrosyl-methioninium (Tyr-Met) (with W-90)); sequence YVNPEGPNGNPDPLAAARDIRETFARM. Heme b is bound at residue histidine 254. The disordered stretch occupies residues 334–359; that stretch reads AHQWKPKHGAGANTVPDAHDPSKRHA.

The protein belongs to the peroxidase family. Peroxidase/catalase subfamily. In terms of assembly, homodimer or homotetramer. Heme b serves as cofactor. In terms of processing, formation of the three residue Trp-Tyr-Met cross-link is important for the catalase, but not the peroxidase activity of the enzyme.

It catalyses the reaction H2O2 + AH2 = A + 2 H2O. The catalysed reaction is 2 H2O2 = O2 + 2 H2O. Bifunctional enzyme with both catalase and broad-spectrum peroxidase activity. In Bradyrhizobium sp. (strain BTAi1 / ATCC BAA-1182), this protein is Catalase-peroxidase.